We begin with the raw amino-acid sequence, 262 residues long: Alpha/beta-gliadin A-I (262 aa).

The N-terminal stretch at 1–20 (MKTFLILALLAIVATTATTA) is a signal peptide. Disordered regions lie at residues 51 to 73 (LGQQ…PSQQ), 87 to 120 (PYSQ…QQQQ), and 225 to 251 (YPLG…QQLP). 2 stretches are compositionally biased toward pro residues: residues 56–71 (PFPP…PFPS) and 93–104 (PFRPQQPYPQPQ). The span at 105–120 (PQYSQPQQPISQQQQQ) shows a compositional bias: low complexity. Residues 232 to 251 (FRPSQQNPQAQGSVQPQQLP) are compositionally biased toward polar residues.

The protein belongs to the gliadin/glutenin family. In terms of processing, substrate of transglutaminase.

Gliadin is the major seed storage protein in wheat. The protein is Alpha/beta-gliadin A-I of Triticum aestivum (Wheat).